We begin with the raw amino-acid sequence, 1349 residues long: Elongator complex protein 1 (1349 aa).

Phosphoserine is present on residues serine 529, serine 539, serine 551, serine 636, and serine 828. The interval 919 to 1349 (QDVNVVYKSA…DFPKSHIVDF (431 aa)) is mediates dimerization. Residues serine 1198 and serine 1202 each carry the phosphoserine; by HRR25 modification. Residues serine 1205 and serine 1209 each carry the phosphoserine modification. Residues 1214-1228 (YTGKTGGTAKTGASR) show a composition bias toward low complexity. Residues 1214-1245 (YTGKTGGTAKTGASRRTAKNKRREERKRARGK) form a disordered region. The tract at residues 1228-1246 (RRTAKNKRREERKRARGKK) is required for binding to tRNA.

Belongs to the ELP1/IKA1 family. Homodimer; dimerization promotes ELP1/IKI3 stability and elongator complex formation. Component of the elongator complex which consists of ELP1/IKI3, ELP2, ELP3, ELP4, ELP5/IKI1 and ELP6. The elongator complex is composed of two copies of the Elp123 subcomplex (composed of ELP1/IKI3, ELP2 and ELP3) and two copies of the Elp456 subcomplex (composed of ELP4, ELP5/IKI1 and ELP6). The Elp123 subcomplex forms a two-lobed scaffold, which binds the Elp456 subcomplex asymmetrically. In the complex, ELP1/IKI3 interacts with ELP2. In each lobe, ELP2 is tightly sandwiched between ELP1/IKI3 and ELP3. The Elp123 subcomplex binds tRNA through ELP1/IKI3 and ELP3 and can bind 2 tRNAs simultaneously. tRNA-binding induces conformational rearrangements which precisely position the targeted anticodon base in the active site. The Elp456 subcomplex binds tRNA and has ATPase activity. ELP1/IKI3 interacts with HRR25 and KTI12. Interacts with KTI11/DPH3. Phosphorylation promotes the tRNA modification function of the elongator complex.

It localises to the cytoplasm. Its subcellular location is the nucleus. It functions in the pathway tRNA modification; 5-methoxycarbonylmethyl-2-thiouridine-tRNA biosynthesis. Component of the elongator complex which is required for multiple tRNA modifications, including mcm5U (5-methoxycarbonylmethyl uridine), mcm5s2U (5-methoxycarbonylmethyl-2-thiouridine), and ncm5U (5-carbamoylmethyl uridine). The elongator complex catalyzes formation of carboxymethyluridine in the wobble base at position 34 in tRNAs. Functions as a gamma-toxin target (TOT); disruption of the complex confers resistance to Kluyveromyces lactis toxin zymocin (pGKL1 killer toxin). May also be involved in sensitivity to Pichia inositovora toxin. ELP1/IKI3 binds to tRNA, mediating interaction of the elongator complex with tRNA. Independently, may be involved in polarized exocytosis. The protein is Elongator complex protein 1 (IKI3) of Saccharomyces cerevisiae (strain ATCC 204508 / S288c) (Baker's yeast).